The chain runs to 243 residues: Retrotransposon Gag-like protein 6 (243 aa).

Residues 1–12 (MVQPRTSKTESP) show a composition bias toward polar residues. Positions 1–22 (MVQPRTSKTESPASAPGASAQM) are disordered. The stretch at 29-69 (LTSLRLTNSALRREASTLRAEKANLTNMLESVMAELTLLRT) forms a coiled coil. Disordered regions lie at residues 84–105 (SAITSNGTRPMTTPPTSLPEPF) and 218–243 (TGSCPVHPASNGTNPAPALPSRGRNL). Over residues 85 to 94 (AITSNGTRPM) the composition is skewed to polar residues.

Belongs to the LDOC1 family. In terms of tissue distribution, widely expressed.

The sequence is that of Retrotransposon Gag-like protein 6 from Mus musculus (Mouse).